Consider the following 361-residue polypeptide: Septin-12 (361 aa).

A Septin-type G domain is found at 45-316; the sequence is MGFEFNIMVV…ENYRIIRLKE (272 aa). The interval 45–318 is interaction with SEPTIN7; it reads MGFEFNIMVV…YRIIRLKESH (274 aa). Positions 55–62 are G1 motif; the sequence is GQSGLGKS. GTP is bound by residues 55-62, Thr88, Gly114, 194-202, Gly250, and Arg265; these read GQSGLGKS and RADSLTIEE. The tract at residues 111 to 114 is G3 motif; that stretch reads DTPG. The segment at 193–196 is G4 motif; it reads ARAD. Positions 257–361 are self-association (via N-terminus) to polymerize octameric septin 12-7-6-2/4-2/4-6-7-12 filaments; the sequence is VNGRCVLGRK…WAEDNSDEDF (105 aa). Residues 333–361 are disordered; that stretch reads PPPAPTGTRASPGPAKMCRWAEDNSDEDF. Residues 338–347 show a composition bias toward low complexity; sequence TGTRASPGPA.

This sequence belongs to the TRAFAC class TrmE-Era-EngA-EngB-Septin-like GTPase superfamily. Septin GTPase family. In terms of assembly, septins polymerize into heterooligomeric protein complexes that form filaments, and can associate with cellular membranes, actin filaments and microtubules. GTPase activity is required for filament formation. Interacts with SEPTIN6 and SEPTIN11. Component of a octameric complex consisting of SEPTIN12, SEPTIN7, SEPTIN6 and SEPTIN2 or SEPTIN4 in the order 12-7-6-2-2-6-7-12 or 12-7-6-4-4-6-7-12 and located in the sperm annulus; the octamer polymerizes into filaments via the SEPTIN12 N- and C-termini; the SEPTIN12:SEPTIN7 association is mediated by the GTP-binding domains. Interacts with SPAG4 and LMNB1. Associates with alpha- and beta-tubulins.

Its subcellular location is the cytoplasm. It localises to the cytoskeleton. The protein resides in the spindle. It is found in the cell projection. The protein localises to the cilium. Its subcellular location is the flagellum. Its function is as follows. Filament-forming cytoskeletal GTPase. May play a role in cytokinesis (Potential). Involved in spermatogenesis. Involved in the morphogenesis of sperm heads and the elongation of sperm tails probably implicating the association with alpha- and beta-tubulins. Forms a filamentous structure with SEPTIN7, SEPTIN6, SEPTIN2 and probably SEPTIN4 at the sperm annulus which is required for the structural integrity and motility of the sperm tail during postmeiotic differentiation. In Bos taurus (Bovine), this protein is Septin-12.